The primary structure comprises 276 residues: NAD-capped RNA hydrolase NudC (276 aa).

Arg-82 is a substrate binding site. Zn(2+) contacts are provided by Cys-112 and Cys-115. Glu-125 provides a ligand contact to substrate. The Zn(2+) site is built by Cys-130 and Cys-133. Tyr-138 is a substrate binding site. In terms of domain architecture, Nudix hydrolase spans 139–262 (PRISPSMIVL…SIARYLIDLY (124 aa)). Ala-172, Glu-188, and Glu-192 together coordinate a divalent metal cation. The Nudix box signature appears at 173–194 (GFAEPGESAEDCLVREVREEVA). Position 206 to 213 (206 to 213 (QCWPFPHS)) interacts with substrate. Residue Glu-233 participates in a divalent metal cation binding. Ala-255 provides a ligand contact to substrate.

This sequence belongs to the Nudix hydrolase family. NudC subfamily. As to quaternary structure, homodimer. It depends on Mg(2+) as a cofactor. Requires Mn(2+) as cofactor. Zn(2+) is required as a cofactor.

The enzyme catalyses a 5'-end NAD(+)-phospho-ribonucleoside in mRNA + H2O = a 5'-end phospho-adenosine-phospho-ribonucleoside in mRNA + beta-nicotinamide D-ribonucleotide + 2 H(+). It carries out the reaction NAD(+) + H2O = beta-nicotinamide D-ribonucleotide + AMP + 2 H(+). The catalysed reaction is NADH + H2O = reduced beta-nicotinamide D-ribonucleotide + AMP + 2 H(+). MRNA decapping enzyme that specifically removes the nicotinamide adenine dinucleotide (NAD) cap from a subset of mRNAs by hydrolyzing the diphosphate linkage to produce nicotinamide mononucleotide (NMN) and 5' monophosphate mRNA. The NAD-cap is present at the 5'-end of some mRNAs and stabilizes RNA against 5'-processing. Has preference for mRNAs with a 5'-end purine. Catalyzes the hydrolysis of a broad range of dinucleotide pyrophosphates. The sequence is that of NAD-capped RNA hydrolase NudC from Pseudomonas putida (strain GB-1).